Reading from the N-terminus, the 1163-residue chain is Rho GTPase-activating protein 45 (1163 aa).

A disordered region spans residues 1–99 (MFSRKKRELM…KRPTSLSRHA (99 aa)). S23 and S25 each carry phosphoserine. A compositionally biased stretch (basic and acidic residues) spans 55–65 (LPKELPRKDGA). Residues S100, S120, and S126 each carry the phosphoserine modification. Disordered regions lie at residues 118–137 (HRSP…GTGP), 262–282 (PPGD…EGTP), and 454–475 (EEEQ…LDKR). Residues 296-566 (EEVDVLLQRC…SSKLYDPGQQ (271 aa)) form the F-BAR domain. Residues 403–526 (EHEKRRKEIK…QIQEVIRQSD (124 aa)) adopt a coiled-coil conformation. Residues 458–470 (AGTAPGAGSTATK) show a composition bias toward low complexity. A phosphoserine mark is found at S596, S605, and S619. Residues 610–695 (DVAGPEAAGS…VDPEGGAGAS (86 aa)) are disordered. A compositionally biased stretch (basic residues) spans 633 to 644 (KGHRAGRGHQVH). S646 bears the Phosphoserine mark. Residues 673–682 (TSSSGTMSST) are compositionally biased toward low complexity. Residues 729–774 (THRLRKLRTPAKCRECNSYVYFQGAECEECCLACHKKCLETLAIQC) form a Phorbol-ester/DAG-type zinc finger. A Rho-GAP domain is found at 788–1001 (QDFSHAARSA…TLIVHYGLVF (214 aa)). S976, S1054, S1057, and S1059 each carry phosphoserine. Disordered regions lie at residues 1042–1067 (AAED…ASEL) and 1087–1163 (SEAS…PEFV). Residues 1087 to 1099 (SEASLEEASGSHS) show a composition bias toward low complexity. Residues 1125-1137 (SGFNTNQSNNVLQ) show a composition bias toward polar residues.

The protein localises to the cytoplasm. Its subcellular location is the cell projection. It localises to the ruffle membrane. Functionally, contains a GTPase activator for the Rho-type GTPases (RhoGAP) domain that would be able to negatively regulate the actin cytoskeleton as well as cell spreading. However, also contains N-terminally a BAR-domin which is able to play an autoinhibitory effect on this RhoGAP activity. The sequence is that of Rho GTPase-activating protein 45 from Pongo abelii (Sumatran orangutan).